The chain runs to 331 residues: Olfactory receptor 7D11 (331 aa).

The Extracellular segment spans residues M1 to P25. The N-linked (GlcNAc...) asparagine glycan is linked to N5. Residues I26 to I46 traverse the membrane as a helical segment. Residues L47–K57 are Cytoplasmic-facing. Residues P58–I78 traverse the membrane as a helical segment. The Extracellular segment spans residues P79–C97. Cysteines 97 and 179 form a disulfide. Residues L98–M118 traverse the membrane as a helical segment. Residues A119–A142 are Cytoplasmic-facing. Residues L143–M163 form a helical membrane-spanning segment. Over N164–N196 the chain is Extracellular. A glycan (N-linked (GlcNAc...) asparagine) is linked at N167. A helical membrane pass occupies residues V197–S217. The Cytoplasmic portion of the chain corresponds to Y218–H244. A helical transmembrane segment spans residues L245–V265. At H266–R271 the chain is on the extracellular side. Residues K272 to L292 traverse the membrane as a helical segment. The Cytoplasmic segment spans residues R293 to L331.

It belongs to the G-protein coupled receptor 1 family.

The protein resides in the cell membrane. Possible olfactory or taste receptor. The chain is Olfactory receptor 7D11 from Mus musculus (Mouse).